The sequence spans 1177 residues: DNA-directed RNA polymerase subunit beta (1177 aa).

The tract at residues 1154 to 1177 is disordered; that stretch reads RDTEDDDDHQSADKLNVEVETTKE. Residues 1162–1177 are compositionally biased toward basic and acidic residues; the sequence is HQSADKLNVEVETTKE.

Belongs to the RNA polymerase beta chain family. As to quaternary structure, the RNAP catalytic core consists of 2 alpha, 1 beta, 1 beta' and 1 omega subunit. When a sigma factor is associated with the core the holoenzyme is formed, which can initiate transcription.

It catalyses the reaction RNA(n) + a ribonucleoside 5'-triphosphate = RNA(n+1) + diphosphate. In terms of biological role, DNA-dependent RNA polymerase catalyzes the transcription of DNA into RNA using the four ribonucleoside triphosphates as substrates. In Bacillus mycoides (strain KBAB4) (Bacillus weihenstephanensis), this protein is DNA-directed RNA polymerase subunit beta.